Here is a 360-residue protein sequence, read N- to C-terminus: Polyamine aminopropyltransferase 2 (360 aa).

The PABS domain maps to 68–299; sequence DIWDEISLKE…TDWGFHIAAN (232 aa). Residue Q94 participates in S-methyl-5'-thioadenosine binding. Residues H123 and D147 each contribute to the spermidine site. S-methyl-5'-thioadenosine is bound by residues D167 and 201–202; that span reads DA. The Proton acceptor role is filled by D219.

It belongs to the spermidine/spermine synthase family. As to quaternary structure, homodimer or homotetramer.

It localises to the cytoplasm. The enzyme catalyses S-adenosyl 3-(methylsulfanyl)propylamine + putrescine = S-methyl-5'-thioadenosine + spermidine + H(+). Its pathway is amine and polyamine biosynthesis; spermidine biosynthesis; spermidine from putrescine: step 1/1. In terms of biological role, catalyzes the irreversible transfer of a propylamine group from the amino donor S-adenosylmethioninamine (decarboxy-AdoMet) to putrescine (1,4-diaminobutane) to yield spermidine. This Bacillus anthracis protein is Polyamine aminopropyltransferase 2.